Here is a 365-residue protein sequence, read N- to C-terminus: Elongation factor Tu (365 aa).

GTP-binding positions include histidine 1–threonine 7, aspartate 62–histidine 66, and asparagine 117–aspartate 120. Residues histidine 1–lysine 185 form the tr-type G domain. Mg(2+) is bound at residue threonine 7.

The protein belongs to the TRAFAC class translation factor GTPase superfamily. Classic translation factor GTPase family. EF-Tu/EF-1A subfamily. In terms of assembly, monomer.

It localises to the cytoplasm. It carries out the reaction GTP + H2O = GDP + phosphate + H(+). In terms of biological role, GTP hydrolase that promotes the GTP-dependent binding of aminoacyl-tRNA to the A-site of ribosomes during protein biosynthesis. The polypeptide is Elongation factor Tu (Buchnera aphidicola subsp. Melaphis rhois).